The primary structure comprises 64 residues: MISVCFVFPHSLALDFKSRCKKNRTKLCSAYYVSQVLRICKEMPYRDLILFSTVRKGVYMRLYY.

This is an uncharacterized protein from Saccharomyces cerevisiae (strain ATCC 204508 / S288c) (Baker's yeast).